We begin with the raw amino-acid sequence, 1166 residues long: ATP-dependent helicase/deoxyribonuclease subunit B (1166 aa).

Residues 1–390 enclose the UvrD-like helicase ATP-binding domain; sequence MGVEFLVGRS…HPLIEFIRSS (390 aa). 8–15 lines the ATP pocket; sequence GRSGSGKT. In terms of domain architecture, UvrD-like helicase C-terminal spans 281-586; sequence TKRHQHAPEL…HFSLIPPALD (306 aa). [4Fe-4S] cluster contacts are provided by Cys801, Cys1121, Cys1124, and Cys1130.

The protein belongs to the helicase family. AddB/RexB type 1 subfamily. Heterodimer of AddA and AddB. It depends on Mg(2+) as a cofactor. Requires [4Fe-4S] cluster as cofactor.

In terms of biological role, the heterodimer acts as both an ATP-dependent DNA helicase and an ATP-dependent, dual-direction single-stranded exonuclease. Recognizes the chi site generating a DNA molecule suitable for the initiation of homologous recombination. The AddB subunit has 5' -&gt; 3' nuclease activity but not helicase activity. The sequence is that of ATP-dependent helicase/deoxyribonuclease subunit B from Bacillus velezensis (strain DSM 23117 / BGSC 10A6 / LMG 26770 / FZB42) (Bacillus amyloliquefaciens subsp. plantarum).